The primary structure comprises 334 residues: Putative fatty acid elongase 1 (334 aa).

Residues 1–51 lie on the Lumenal side of the membrane; that stretch reads MDLTGAHMLKIHRPSIDHPFGVDLWHLFEQLSIKTIGWNPSEFEYIPGKTP. The helical transmembrane segment at 52–72 threads the bilayer; it reads MSQWSSVIVSITAYYVIILSG. Residues 73-86 lie on the Cytoplasmic side of the membrane; that stretch reads RAIMTNRKPLKQRR. Residues 87–107 traverse the membrane as a helical segment; the sequence is LFQLHNFILTIISGALLALLV. The Lumenal portion of the chain corresponds to 108–135; sequence EEVFRNYMRNGLFYCVCDSRHFTQRLVT. A helical transmembrane segment spans residues 136 to 156; it reads LYYLNYLTKYLELMDTVFLFL. At 157-160 the chain is on the cytoplasmic side; that stretch reads KKKP. The helical transmembrane segment at 161 to 181 threads the bilayer; sequence LAFLHCYHHGITALLCFTQLL. Residues 182–187 lie on the Lumenal side of the membrane; the sequence is GRTSVQ. The chain crosses the membrane as a helical span at residues 188 to 208; it reads WGVIGLNLYVHVIMYSYYFLA. Over 209-224 the chain is Cytoplasmic; that stretch reads ACGRRVWWKQWVTRVQ. A helical membrane pass occupies residues 225–245; it reads IIQFVLDLILCYFGTYSHIAF. The Lumenal segment spans residues 246-260; sequence RYFPWLPHVGDCSGS. The chain crosses the membrane as a helical span at residues 261–281; it reads LFAAFFGCGVLSSYLFLFIGF. Residues 282–334 lie on the Cytoplasmic side of the membrane; that stretch reads YINTYIKRGAKKNQRKAAGKADNTSVAAAAGSEALAATTATNASPFSARSRKL. Residue S325 is modified to Phosphoserine.

It belongs to the ELO family.

It localises to the endoplasmic reticulum membrane. The catalysed reaction is a very-long-chain acyl-CoA + malonyl-CoA + H(+) = a very-long-chain 3-oxoacyl-CoA + CO2 + CoA. In terms of biological role, may be involved in the synthesis of very long chain fatty acids. The chain is Putative fatty acid elongase 1 from Schizosaccharomyces pombe (strain 972 / ATCC 24843) (Fission yeast).